Reading from the N-terminus, the 358-residue chain is uncharacterized protein (358 aa).

The protein belongs to the SMP-30/CGR1 family.

This is an uncharacterized protein from Saccharomyces cerevisiae (strain ATCC 204508 / S288c) (Baker's yeast).